We begin with the raw amino-acid sequence, 261 residues long: Indole-3-glycerol phosphate synthase (261 aa).

Belongs to the TrpC family.

It carries out the reaction 1-(2-carboxyphenylamino)-1-deoxy-D-ribulose 5-phosphate + H(+) = (1S,2R)-1-C-(indol-3-yl)glycerol 3-phosphate + CO2 + H2O. It functions in the pathway amino-acid biosynthesis; L-tryptophan biosynthesis; L-tryptophan from chorismate: step 4/5. This Burkholderia pseudomallei (strain 1710b) protein is Indole-3-glycerol phosphate synthase.